A 345-amino-acid chain; its full sequence is Dimethyladenosine transferase 1, mitochondrial (345 aa).

The N-terminal 27 residues, 1 to 27 (MAASGKLGTFRLPPLPTIREIIKLFGL), are a transit peptide targeting the mitochondrion. Residues 35-38 (QNFL), Asn-36, Leu-38, Gly-63, Glu-85, Asp-111, and Asn-141 contribute to the S-adenosyl-L-methionine site.

The protein belongs to the class I-like SAM-binding methyltransferase superfamily. rRNA adenine N(6)-methyltransferase family. KsgA subfamily. Interacts with mitochondrial RNA polymerase POLRMT. Interacts with TFAM.

It is found in the mitochondrion. Its function is as follows. S-adenosyl-L-methionine-dependent methyltransferase which specifically dimethylates mitochondrial 12S rRNA at the conserved stem loop. Also required for basal transcription of mitochondrial DNA, probably via its interaction with POLRMT and TFAM. Stimulates transcription independently of the methyltransferase activity. This chain is Dimethyladenosine transferase 1, mitochondrial (Tfb1m), found in Rattus norvegicus (Rat).